The following is a 110-amino-acid chain: uncharacterized protein (110 aa).

The segment covering M1 to E20 has biased composition (polar residues). Residues M1 to R24 are disordered.

This is an uncharacterized protein from Bacillus subtilis (strain 168).